The sequence spans 1208 residues: ATP-dependent DNA helicase Q4 (1208 aa).

2 disordered regions span residues 17–180 and 201–333; these read AFRR…ASLS and FLGA…AGKA. Ser27 carries the phosphoserine modification. The span at 36–47 shows a compositional bias: basic and acidic residues; it reads EETRALYREYRT. Residues 61–70 show a composition bias toward low complexity; the sequence is SSESLPAAAE. Over residues 86–100 the composition is skewed to polar residues; sequence ATKSPQSTPGRSRQG. Phosphoserine is present on residues Ser178 and Ser180. Polar residues predominate over residues 273-283; that stretch reads AQVQQESSQAG. The Helicase ATP-binding domain maps to 489 to 662; that stretch reads VMRILSGIST…AQHLAVAEEP (174 aa). Position 502-509 (502-509) interacts with ATP; that stretch reads LPTGAGKS. Positions 605–608 match the DEAH box motif; it reads DEAH. The Helicase C-terminal domain maps to 683–850; it reads DTDQALLTLL…AVKRLVQRVF (168 aa). Positions 853 and 855 each coordinate Zn(2+). The interval 860 to 888 is disordered; that stretch reads PPSEQEGAVGGERPVPKYPPQEAEQLSHQ. The Zn(2+) site is built by Cys897 and His900. Residues 1111–1130 form a disordered region; that stretch reads EEGQEPGGMEDAQGPEPGQA. The tract at residues 1117–1208 is increases helicase activity about 5-fold (in a fragment starting at residue 427); that stretch reads GGMEDAQGPE…ATEELLQVAR (92 aa).

This sequence belongs to the helicase family. RecQ subfamily. As to quaternary structure, interacts with UBR1 and UBR2. Interacts with MCM10; this interaction regulates RECQL4 unwinding activity. Interacts (via residues 1-54) with TOPBP1. Zn(2+) is required as a cofactor. In terms of tissue distribution, ubiquitously expressed, with highest levels in thymus and testis.

Its subcellular location is the cytoplasm. The protein resides in the nucleus. The catalysed reaction is Couples ATP hydrolysis with the unwinding of duplex DNA by translocating in the 3'-5' direction.. It carries out the reaction ATP + H2O = ADP + phosphate + H(+). Functionally, an ATP-dependent DNA helicase which unwinds dsDNA with a 3'-overhang in a 3'-5' direction. Does not unwind more than 18 bp of dsDNA. May modulate chromosome segregation. The N-terminal domain (residues 1-54) binds DNA Y-shaped DNA better than ss- or dsDNA. The core helicase domain binds ssDNA. This Homo sapiens (Human) protein is ATP-dependent DNA helicase Q4 (RECQL4).